The primary structure comprises 340 residues: L-threonine 3-dehydrogenase (340 aa).

C38 contacts Zn(2+). Active-site charge relay system residues include T40 and H43. 6 residues coordinate Zn(2+): H63, E64, C93, C96, C99, and C107. NAD(+) is bound by residues I175, D195, R200, 261-263 (LGI), and 285-286 (IY).

The protein belongs to the zinc-containing alcohol dehydrogenase family. In terms of assembly, homotetramer. The cofactor is Zn(2+).

It is found in the cytoplasm. It carries out the reaction L-threonine + NAD(+) = (2S)-2-amino-3-oxobutanoate + NADH + H(+). The protein operates within amino-acid degradation; L-threonine degradation via oxydo-reductase pathway; glycine from L-threonine: step 1/2. Catalyzes the NAD(+)-dependent oxidation of L-threonine to 2-amino-3-ketobutyrate. The polypeptide is L-threonine 3-dehydrogenase (Xanthomonas euvesicatoria pv. vesicatoria (strain 85-10) (Xanthomonas campestris pv. vesicatoria)).